We begin with the raw amino-acid sequence, 200 residues long: Ubiquinol-cytochrome-c reductase complex assembly factor 1 (200 aa).

Belongs to the CBP3 family.

It is found in the mitochondrion inner membrane. Required for the assembly of the ubiquinol-cytochrome c reductase complex (mitochondrial respiratory chain complex III or cytochrome b-c1 complex). May be involved in cytochrome b translation and/or stability. This Xenopus laevis (African clawed frog) protein is Ubiquinol-cytochrome-c reductase complex assembly factor 1 (uqcc1).